A 459-amino-acid polypeptide reads, in one-letter code: Phosphoenolpyruvate carboxylase (459 aa).

Belongs to the PEPCase type 2 family. As to quaternary structure, homotetramer. Mg(2+) is required as a cofactor.

The catalysed reaction is oxaloacetate + phosphate = phosphoenolpyruvate + hydrogencarbonate. In terms of biological role, catalyzes the irreversible beta-carboxylation of phosphoenolpyruvate (PEP) to form oxaloacetate (OAA), a four-carbon dicarboxylic acid source for the tricarboxylic acid cycle. The chain is Phosphoenolpyruvate carboxylase from Pyrobaculum calidifontis (strain DSM 21063 / JCM 11548 / VA1).